The sequence spans 359 residues: N6-succino-2-amino-2'-deoxyadenylate synthase (359 aa).

The active-site Proton acceptor is the Ser-23. Positions 23, 24, 25, 26, and 27 each coordinate ATP. Ser-23 contacts dGMP. Residue Ser-23 coordinates Mg(2+). DGMP is bound at residue Asn-49. ATP is bound by residues Gly-51, His-52, and Thr-53. Position 51 (Gly-51) interacts with Mg(2+). The dGMP site is built by Ser-131, Thr-132, and Arg-146. Gln-190 serves as a coordination point for ATP. Thr-205 is a binding site for dGMP. A Mg(2+)-binding site is contributed by Thr-274. The L-aspartate site is built by Thr-274, Val-275, and Arg-280. 2 residues coordinate ATP: Asn-305 and Gln-308.

This sequence belongs to the Caudovirales PurZ family. Mg(2+) is required as a cofactor.

It catalyses the reaction dGMP + L-aspartate + ATP = (2S)-2-amino-2'-deoxyadenylo-succinate + ADP + phosphate + 2 H(+). It participates in purine metabolism. In terms of biological role, involved in the synthesis of the atypical nucleotide dZTP (2-amino-2'-deoxyadenosine-5'-triphosphate). Catalyzes the condensation of aspartate with deoxyguanylate into dSMP (N6-succino-2-amino-2'-deoxyadenylate), which undergoes defumarylation and phosphorylation respectively by host PurB and guanylate/nucleoside diphosphate kinases to give dZTP. dZTP is integrated into the viral genome instead of adenine by the viral DNA polymerase. This Z-base probably completely replaces adenosine and forms a triple bond to the opposite T-base. The resulting non-standard viral DNA is called Z-genome. The chemically modified DNA is probably harder for the host bacteria to digest with nucleases or restriction enzymes. This is N6-succino-2-amino-2'-deoxyadenylate synthase from Cyanophage S-2L (Cyanobacteria phage S-2L).